A 176-amino-acid chain; its full sequence is Protein Dr1 (176 aa).

Position 2 is an N-acetylalanine (A2). The Histone-fold domain maps to 12 to 75 (TIPRAAINKM…ISPEHVIQAL (64 aa)). The short motif at 100 to 103 (KRRK) is the Nuclear localization signal element. S105, S106, S166, and S167 each carry phosphoserine. Residues 152 to 167 (QLAAASASASNQAGSS) are compositionally biased toward low complexity. The tract at residues 152 to 176 (QLAAASASASNQAGSSQDEEDDDDI) is disordered.

It belongs to the NC2 beta/DR1 family. Heterodimer with DRAP1. DR1 exists in solution as a homotetramer that dissociates during interaction with TBP and then, after complexing with TBP, reassociates at a slow rate, to reconstitute the tetramer. Interacts with NFIL3. Component of the ADA2A-containing complex (ATAC), composed of KAT14, KAT2A, TADA2L, TADA3L, ZZ3, MBIP, WDR5, YEATS2, CCDC101 and DR1. Post-translationally, phosphorylation regulates its interaction with TBP. Not phosphorylated when bound to DRAP1.

Its subcellular location is the nucleus. Functionally, the association of the DR1/DRAP1 heterodimer with TBP results in a functional repression of both activated and basal transcription of class II genes. This interaction precludes the formation of a transcription-competent complex by inhibiting the association of TFIIA and/or TFIIB with TBP. Can bind to DNA on its own. Component of the ATAC complex, a complex with histone acetyltransferase activity on histones H3 and H4. This chain is Protein Dr1 (DR1), found in Homo sapiens (Human).